The following is a 307-amino-acid chain: MNDTIPATGHLLGAADIRRIAADAGISPTKKFGQNFVIDPGTVRRIVREAGVTAADHVMEVGPGLGSLTLAILETGATMTAVEIDPPLAERLPGTVAEFMPEATSRLTVVNRDALTVTPENVPDFSDDASFTLVANLPYNVATPILLTLLERFDNLGSFLVMVQKEVADRLAAKPGSKIYGTPSVKLAWYGTAERVGTIGRNVFWPAPNVDSALVKFTRYQADDPAAPGTANSTDDGTQRELVFRLIDAAFGQRRKTLHAALKTIAPSEAFSIAGIDPTRRGETLTIAEFTALAKAIESCGDGDEAQ.

Positions 35, 37, 62, 83, 113, and 136 each coordinate S-adenosyl-L-methionine.

Belongs to the class I-like SAM-binding methyltransferase superfamily. rRNA adenine N(6)-methyltransferase family. RsmA subfamily.

The protein resides in the cytoplasm. It carries out the reaction adenosine(1518)/adenosine(1519) in 16S rRNA + 4 S-adenosyl-L-methionine = N(6)-dimethyladenosine(1518)/N(6)-dimethyladenosine(1519) in 16S rRNA + 4 S-adenosyl-L-homocysteine + 4 H(+). Its function is as follows. Specifically dimethylates two adjacent adenosines (A1518 and A1519) in the loop of a conserved hairpin near the 3'-end of 16S rRNA in the 30S particle. May play a critical role in biogenesis of 30S subunits. In Bifidobacterium longum subsp. infantis (strain ATCC 15697 / DSM 20088 / JCM 1222 / NCTC 11817 / S12), this protein is Ribosomal RNA small subunit methyltransferase A.